The chain runs to 165 residues: Yapsin-5 (165 aa).

The N-terminal stretch at 1–24 (MQLFSILSLLSSLMCSLTVLGSSA) is a signal peptide. Asn57 carries an N-linked (GlcNAc...) asparagine glycan. The 99-residue stretch at 67-165 (YVVKMEIGTP…TRLSSMTYTY (99 aa)) folds into the Peptidase A1 domain.

Belongs to the peptidase A1 family.

In Saccharomyces cerevisiae (strain ATCC 204508 / S288c) (Baker's yeast), this protein is Yapsin-5 (YPS5).